Here is a 105-residue protein sequence, read N- to C-terminus: Pyrimidine/purine nucleoside phosphorylase (105 aa).

The protein belongs to the nucleoside phosphorylase PpnP family.

The enzyme catalyses a purine D-ribonucleoside + phosphate = a purine nucleobase + alpha-D-ribose 1-phosphate. It carries out the reaction adenosine + phosphate = alpha-D-ribose 1-phosphate + adenine. The catalysed reaction is cytidine + phosphate = cytosine + alpha-D-ribose 1-phosphate. It catalyses the reaction guanosine + phosphate = alpha-D-ribose 1-phosphate + guanine. The enzyme catalyses inosine + phosphate = alpha-D-ribose 1-phosphate + hypoxanthine. It carries out the reaction thymidine + phosphate = 2-deoxy-alpha-D-ribose 1-phosphate + thymine. The catalysed reaction is uridine + phosphate = alpha-D-ribose 1-phosphate + uracil. It catalyses the reaction xanthosine + phosphate = alpha-D-ribose 1-phosphate + xanthine. Functionally, catalyzes the phosphorolysis of diverse nucleosides, yielding D-ribose 1-phosphate and the respective free bases. Can use uridine, adenosine, guanosine, cytidine, thymidine, inosine and xanthosine as substrates. Also catalyzes the reverse reactions. The sequence is that of Pyrimidine/purine nucleoside phosphorylase from Ralstonia pickettii (strain 12J).